Consider the following 304-residue polypeptide: Ring-infected erythrocyte surface antigen (304 aa).

N-linked (GlcNAc...) asparagine glycosylation is found at N18 and N22. Over residues 142–159 (EHDAEENVEHDAEENVEH) the composition is skewed to basic and acidic residues. Positions 142–304 (EHDAEENVEH…EENVEEHNGI (163 aa)) are disordered. A compositionally biased stretch (acidic residues) spans 160–298 (DAEENAEENV…NVEEYDEENV (139 aa)).

The protein resides in the cell membrane. Its function is as follows. May disrupt the normal intermolecular interactions of the cytoplasmic domain of band 3 and thereby facilitate the invagination of the red cell membrane which is necessary for the formation of the parasitophorous vacuole. In Plasmodium falciparum (isolate Palo Alto / Uganda), this protein is Ring-infected erythrocyte surface antigen (RESA).